Here is a 391-residue protein sequence, read N- to C-terminus: Oocyte zinc finger protein XlCOF7.2 (391 aa).

C2H2-type zinc fingers lie at residues 284 to 306, 312 to 334, 340 to 362, and 368 to 391; these read FPCS…YRTH, YPCS…RRIH, SSCS…HRTH, and YSCS…RRTH.

This sequence belongs to the krueppel C2H2-type zinc-finger protein family.

It is found in the nucleus. Its function is as follows. May be involved in transcriptional regulation. This chain is Oocyte zinc finger protein XlCOF7.2, found in Xenopus laevis (African clawed frog).